Here is a 325-residue protein sequence, read N- to C-terminus: MLKAPRFWYQPRSLLGGILSPFSFLYQIIVRIRRGLYAVGLKKISKFPVSIVIVGNITVGGSGKTPFVIWLANELKNRGFRPGVVSRGYGGKANRFPQTVTENSDPLQVGDEAVLLMKKIDCPMVVCRDRGAAVKHLLRNFQCDVVIGDDGLQHYSLGRDLEIALLDDRHLGNGRCLPAGPLREPKSRLNTVDFVVPKQLRPNEIYQLKNPAKKIDFNELKELTVHAVAGIGNPGYFFKQLETLGANVIAHPFRDHYFYRSEDFNFDDDHLIILTEKDAIKCKQFDDERLFCFSVDAVVPDQFQNDFFRLISNIILRKQAQREGI.

ATP is bound at residue 58–65 (TVGGSGKT).

It belongs to the LpxK family.

It carries out the reaction a lipid A disaccharide + ATP = a lipid IVA + ADP + H(+). It functions in the pathway glycolipid biosynthesis; lipid IV(A) biosynthesis; lipid IV(A) from (3R)-3-hydroxytetradecanoyl-[acyl-carrier-protein] and UDP-N-acetyl-alpha-D-glucosamine: step 6/6. Transfers the gamma-phosphate of ATP to the 4'-position of a tetraacyldisaccharide 1-phosphate intermediate (termed DS-1-P) to form tetraacyldisaccharide 1,4'-bis-phosphate (lipid IVA). This is Tetraacyldisaccharide 4'-kinase from Coxiella burnetii (strain CbuG_Q212) (Coxiella burnetii (strain Q212)).